A 148-amino-acid chain; its full sequence is Aspartate carbamoyltransferase regulatory chain (148 aa).

Residues Cys106, Cys111, Cys134, and Cys137 each contribute to the Zn(2+) site.

The protein belongs to the PyrI family. As to quaternary structure, contains catalytic and regulatory chains. Zn(2+) is required as a cofactor.

Involved in allosteric regulation of aspartate carbamoyltransferase. The protein is Aspartate carbamoyltransferase regulatory chain of Methanococcus maripaludis (strain C7 / ATCC BAA-1331).